The sequence spans 97 residues: UPF0235 protein PFL_5841 (97 aa).

It belongs to the UPF0235 family.

This is UPF0235 protein PFL_5841 from Pseudomonas fluorescens (strain ATCC BAA-477 / NRRL B-23932 / Pf-5).